We begin with the raw amino-acid sequence, 364 residues long: DNA replication and repair protein RecF (364 aa).

30–37 serves as a coordination point for ATP; the sequence is GNNAQGKT.

It belongs to the RecF family.

It is found in the cytoplasm. Its function is as follows. The RecF protein is involved in DNA metabolism; it is required for DNA replication and normal SOS inducibility. RecF binds preferentially to single-stranded, linear DNA. It also seems to bind ATP. The sequence is that of DNA replication and repair protein RecF from Clostridium botulinum (strain 657 / Type Ba4).